The sequence spans 292 residues: MRLVKTVAELRDAIAAFRRAGKTIGFVPTMGFLHIGHLTLVARAKAENDATVVSIFVNPLQFGANEDLARYPRDLARDSALLQEAGVDILFAPDVTEMYPRPIQTVVDVPELGSQLEGAVRPGHFAGVTTVVTKLFNLVQPDAAYFGEKDYQQVTLVRRMVEDLAQPVRVIPVATVREADGLACSSRNVYLSPEQRAAAVIVPHALDEAERLYAEGVDDPAAIEAAIEKFIAAEPLASPEVVAVRDPDTLAPVASLQAGPVLVALFVRFGSTRLLDNRVIGREKTAEQEAAQ.

30–37 (MGFLHIGH) serves as a coordination point for ATP. Residue His37 is the Proton donor of the active site. Gln61 is a binding site for (R)-pantoate. Gln61 is a binding site for beta-alanine. ATP is bound at residue 147 to 150 (GEKD). Residue Gln153 participates in (R)-pantoate binding. Residues Val176 and 184-187 (CSSR) contribute to the ATP site.

It belongs to the pantothenate synthetase family. Homodimer.

The protein localises to the cytoplasm. The catalysed reaction is (R)-pantoate + beta-alanine + ATP = (R)-pantothenate + AMP + diphosphate + H(+). It functions in the pathway cofactor biosynthesis; (R)-pantothenate biosynthesis; (R)-pantothenate from (R)-pantoate and beta-alanine: step 1/1. Its function is as follows. Catalyzes the condensation of pantoate with beta-alanine in an ATP-dependent reaction via a pantoyl-adenylate intermediate. This is Pantothenate synthetase from Agrobacterium fabrum (strain C58 / ATCC 33970) (Agrobacterium tumefaciens (strain C58)).